A 368-amino-acid polypeptide reads, in one-letter code: MLIHICCSVDNLYFLKKAKEAFAGEKIVGFFYNPNIHPYSEYLLRLEDVKRTCEMLGIELLEGDYELEKFLDKAKGKELLGEKSERCFECFDLRLEASALKAFELGEEKFTTTLLTSPKKDPNQLIAKGQSIAQRHNLEFVVFRNDNFEHFKSELDLNLQALARENELYRQNYCGCQFALKIQKESQNRSPFELYSPLKRQILPASIEERTQVFRTLDMAKKDANKPFLAQKTIATYRLLNGGVWLSKNSNPLNCCILARSKSKAKVRINDLRWVFSQRLSVLVGYSQRDETLFLTLEGLNTLMAKNYDNLKELNLNPLNYEEELSLRALVSGSESINPIIVLEERTEKTLFVEIKSVFQEEKVFYLL.

Residues Cys-6, Cys-7, Cys-87, and Cys-90 each contribute to the [4Fe-4S] cluster site. A disulfide bridge connects residues Cys-174 and Cys-176.

Belongs to the QueH family.

It carries out the reaction epoxyqueuosine(34) in tRNA + AH2 = queuosine(34) in tRNA + A + H2O. It functions in the pathway tRNA modification; tRNA-queuosine biosynthesis. Functionally, catalyzes the conversion of epoxyqueuosine (oQ) to queuosine (Q), which is a hypermodified base found in the wobble positions of tRNA(Asp), tRNA(Asn), tRNA(His) and tRNA(Tyr). The protein is Epoxyqueuosine reductase QueH of Helicobacter pylori (strain ATCC 700392 / 26695) (Campylobacter pylori).